Consider the following 435-residue polypeptide: Eukaryotic peptide chain release factor subunit 1 (435 aa).

It belongs to the eukaryotic release factor 1 family. Heterodimer of two subunits, one of which binds GTP.

It localises to the cytoplasm. In terms of biological role, directs the termination of nascent peptide synthesis (translation) in response to the termination codons UAA, UAG and UGA. The chain is Eukaryotic peptide chain release factor subunit 1 (SU2) from Podospora anserina (Pleurage anserina).